Here is a 758-residue protein sequence, read N- to C-terminus: DNA ligase (758 aa).

Residues 1–28 (MPENFGAMRQDGLVSTSESDSPAPAATP) are disordered. NAD(+) is bound by residues 60-64 (DAEFD), 109-110 (SL), and E148. K150 functions as the N6-AMP-lysine intermediate in the catalytic mechanism. NAD(+)-binding residues include R171, E208, K324, and K348. Zn(2+) is bound by residues C442, C445, C461, and C467. The BRCT domain occupies 660–749 (SVRRTLAGLT…PDHSAEAEEN (90 aa)). Positions 735-758 (LLAHGPDHSAEAEENESEGSTTND) are disordered.

Belongs to the NAD-dependent DNA ligase family. LigA subfamily. Mg(2+) is required as a cofactor. The cofactor is Mn(2+).

The catalysed reaction is NAD(+) + (deoxyribonucleotide)n-3'-hydroxyl + 5'-phospho-(deoxyribonucleotide)m = (deoxyribonucleotide)n+m + AMP + beta-nicotinamide D-nucleotide.. Functionally, DNA ligase that catalyzes the formation of phosphodiester linkages between 5'-phosphoryl and 3'-hydroxyl groups in double-stranded DNA using NAD as a coenzyme and as the energy source for the reaction. It is essential for DNA replication and repair of damaged DNA. This chain is DNA ligase, found in Renibacterium salmoninarum (strain ATCC 33209 / DSM 20767 / JCM 11484 / NBRC 15589 / NCIMB 2235).